Consider the following 1664-residue polypeptide: MDISKPVGSEITSVDFGILTAKEIRNLSAKQITNPTVLDNLGHPVSGGLYDLALGAFLRNLCSTCGLDEKFCPGHQGHIELPVPCYNPLFFNQLYIYLRASCLFCHHFRLKSVEVHRYACKLRLLQYGLIDESYKLDEITLGSLNSSMYTDDEAIEDNEDEMDGEGSKQSKDISSTLLNELKSKRSEYVDMAIAKALSDGRTTERGSFTATVNDERKKLVHEFHKKLLSRGKCDNCGMFSPKFRKDGFTKIFETALNEKQITNNRVKGFIRQDMIKKQKQAKKLDGSNEASANDEESFDVGRNPTTRPKTGSTYILSTEVKNILDTVFRKEQCVLQYVFHSRPNLSRKLVKADSFFMDVLVVPPTRFRLPSKLGEEVHENSQNQLLSKVLTTSLLIRDLNDDLSKLQKDKVSLEDRRVIFSRLMNAFVTIQNDVNAFIDSTKAQGRTSGKVPIPGVKQALEKKEGLFRKHMMGKRVNYAARSVISPDPNIETNEIGVPPVFAVKLTYPEPVTAYNIAELRQAVINGPDKWPGATQIQNEDGSLVSLIGMSVEQRKALANQLLTPSSNVSTHTLNKKVYRHIKNRDVVLMNRQPTLHKASMMGHKVRVLPNEKTLRLHYANTGAYNADFDGDEMNMHFPQNENARAEALNLANTDSQYLTPTSGSPVRGLIQDHISAGVWLTSKDSFFTREQYQQYIYGCIRPEDGHTTRSKIVTLPPTIFKPYPLWTGKQIITTVLLNVTPPDMPGINLISKNKIKNEYWGKGSLENEVLFKDGALLCGILDKSQYGASKYGIVHSLHEVYGPEVAAKVLSVLGRLFTNYITATAFTCGMDDLRLTAEGNKWRTDILKTSVDTGREAAAEVTNLDKDTPADDPELLKRLQEILRDNNKSGILDAVTSSKVNAITSQVVSKCVPDGTMKKFPCNSMQAMALSGAKGSNVNVSQIMCLLGQQALEGRRVPVMVSGKTLPSFKPYETDAMAGGYVKGRFYSGIKPQEYYFHCMAGREGLIDTAVKTSRSGYLQRCLTKQLEGVHVSYDNSIRDADGTLVQFMYGGDAIDITKESHMTQFEFCLDNYYALLKKYNPSALIEHLDVESALKYSKKTLKYRKKHSKEPHYKQSVKYDPVLAKYNPAKYLGSVSENFQDKLESFLDKNSKLFKSSDGVNEKKFRALMQLKYMRSLINPGEAVGIIASQSVGEPSTQMTLNTFHFAGHGAANVTLGIPRLREIVMTASAAIKTPQMTLPIWNDVSDEQADTFCKSISKVLLSEVIDKVIVTETTGTSNTAGGNAARSYVIHMRFFDNNEYSEEYDVSKEELQNVISNQFIHLLEAAIVKEIKKQKRTTGPDIGVAVPRLQTDVANSSSNSKRLEEDNDEEQSHKKTKQAVSYDEPDEDEIETMREAEKSSDEEGIDSDKESDSDSEDEDVDMNEQINKSIVEANNNMNKVQRDRQSAIISHHRFITKYNFDDESGKWCEFKLELAADTEKLLMVNIVEEICRKSIIRQIPHIDRCVHPEPENGKRVLVTEGVNFQAMWDQEAFIDVDGITSNDVAAVLKTYGVEAARNTIVNEINNVFSRYAISVSFRHLDLIADMMTRQGTYLAFNRQGMETSTSSFMKMSYETTCQFLTKAVLDNEREQLDSPSARIVVGKLNNVGTGSFDVLAKVPNAA.

The Zn(2+) site is built by C62, C65, C72, H75, C102, C105, C233, and C236. Positions 280–310 (QAKKLDGSNEASANDEESFDVGRNPTTRPKT) are disordered. 3 residues coordinate Mg(2+): D627, D629, and D631. Phosphoserine is present on S889. Residues 992–1004 (PQEYYFHCMAGRE) form a bridging helix region. Residues 1343–1423 (DIGVAVPRLQ…DSDSEDEDVD (81 aa)) are disordered. A compositionally biased stretch (basic and acidic residues) spans 1393 to 1414 (ETMREAEKSSDEEGIDSDKESD). S1636 bears the Phosphoserine mark.

This sequence belongs to the RNA polymerase beta' chain family. As to quaternary structure, component of the RNA polymerase I (Pol I) complex consisting of 14 subunits: RPA135, RPA190, RPC40, RPA14, RPB5, RPO26, RPA43, RPB8, RPA12, RPB10, RPC19, RPC10, RPA49 and RPA34. The complex is composed of a horseshoe-shaped core containing ten subunits (RPA135, RPA190, RPB5, RPO26, RPB8, RPB10, RPC10, RPA12, RPC19 and RPC40) where RPA135 and RPA190 form the DNA-binding cleft. Outside of the core, RPA14 and RPA43 form the stalk that mediates interactions with transcription initiation factors and newly synthesized RNA.

The protein resides in the nucleus. Its subcellular location is the nucleolus. It catalyses the reaction RNA(n) + a ribonucleoside 5'-triphosphate = RNA(n+1) + diphosphate. Its function is as follows. DNA-dependent RNA polymerases catalyze the transcription of DNA into RNA using the four ribonucleoside triphosphates as substrates. Component of RNA polymerase I (Pol I) which synthesizes ribosomal RNA precursors. Besides, RNA polymerase I has intrinsic RNA cleavage activity. RPA190 and RPA135 both contribute to the polymerase catalytic activity and together form the Pol I active center. In addition, subunit RPA12 contributes a catalytic zinc ribbon that is required for RNA cleavage by Pol I. A single stranded DNA template strand of the promoter is positioned within the central active site cleft of Pol I. A bridging helix emanates from RPA190 and crosses the cleft near the catalytic site and is thought to promote translocation of Pol I by acting as a ratchet that moves the RNA-DNA hybrid through the active site by switching from straight to bent conformations at each step of nucleotide addition. The chain is DNA-directed RNA polymerase I subunit RPA190 (RPA190) from Saccharomyces cerevisiae (strain ATCC 204508 / S288c) (Baker's yeast).